Here is a 431-residue protein sequence, read N- to C-terminus: 23S rRNA (uracil(1939)-C(5))-methyltransferase RlmD (431 aa).

One can recognise a TRAM domain in the interval 10–68; sequence RVTTRQIITVKVNDLDSFGQGVARHNGKALFIPGLLPEESAEVIITEDKKQFARARVSR. Cys81, Cys87, Cys90, and Cys161 together coordinate [4Fe-4S] cluster. 6 residues coordinate S-adenosyl-L-methionine: Gln264, Phe293, Asn298, Glu314, Asn341, and Asp362. Cys388 serves as the catalytic Nucleophile.

This sequence belongs to the class I-like SAM-binding methyltransferase superfamily. RNA M5U methyltransferase family. RlmD subfamily.

It catalyses the reaction uridine(1939) in 23S rRNA + S-adenosyl-L-methionine = 5-methyluridine(1939) in 23S rRNA + S-adenosyl-L-homocysteine + H(+). Its function is as follows. Catalyzes the formation of 5-methyl-uridine at position 1939 (m5U1939) in 23S rRNA. The protein is 23S rRNA (uracil(1939)-C(5))-methyltransferase RlmD of Salmonella choleraesuis (strain SC-B67).